We begin with the raw amino-acid sequence, 782 residues long: General transcription and DNA repair factor IIH helicase/translocase subunit XPB (782 aa).

Positions 1–11 are enriched in basic and acidic residues; the sequence is MGKRDRADRDK. 2 disordered regions span residues 1 to 51 and 218 to 241; these read MGKR…ESGT and SAISKTAESSGGPSTSRVTDPQGK. The Nuclear localization signal signature appears at 6-18; sequence RADRDKKKSRKRH. The segment covering 21–30 has biased composition (acidic residues); sequence DEEDDEEDAP. A compositionally biased stretch (polar residues) spans 218–236; it reads SAISKTAESSGGPSTSRVT. One can recognise a Helicase ATP-binding domain in the interval 327–488; that stretch reads MFGNGRARSG…DLNFLIGPKL (162 aa). ATP is bound at residue 340-347; the sequence is LPCGAGKS. A DEVH box motif is present at residues 441 to 444; it reads DEVH. Positions 542–702 constitute a Helicase C-terminal domain; the sequence is RACQFLIKFH…LAGMEEEDLA (161 aa). A Phosphoserine modification is found at serine 686. The residue at position 751 (serine 751) is a Phosphoserine; by CK2.

The protein belongs to the helicase family. RAD25/XPB subfamily. Component of the 7-subunit TFIIH core complex composed of XPB/ERCC3, XPD/ERCC2, GTF2H1, GTF2H2, GTF2H3, GTF2H4 and GTF2H5, which is active in NER. The core complex associates with the 3-subunit CDK-activating kinase (CAK) module composed of CCNH/cyclin H, CDK7 and MNAT1 to form the 10-subunit holoenzyme (holo-TFIIH) active in transcription. Interacts with PUF60. Interacts with ATF7IP. Interacts with KAT2A; leading to KAT2A recruitment to promoters and acetylation of histones. Part of TBP-based Pol II pre-initiation complex (PIC), in which Pol II core assembles with general transcription factors and other specific initiation factors including GTF2E1, GTF2E2, GTF2F1, GTF2F2, TCEA1, ERCC2, ERCC3, GTF2H2, GTF2H3, GTF2H4, GTF2H5, GTF2A1, GTF2A2, GTF2B and TBP; this large multi-subunit PIC complex mediates DNA unwinding and targets Pol II core to the transcription start site where the first phosphodiester bond forms. Phosphorylation on Ser-751 by CK2 controls the 5'-excision activity of ERCC1-XPF endonuclease; phosphorylated protein inhibits the excision activity and thus NER. Dephosphorylation reactivates the 5'-excision step. Phosphorylation has no effect on transcription or the 3'-5' helicase activity.

The protein localises to the nucleus. It catalyses the reaction Couples ATP hydrolysis with the unwinding of duplex DNA by translocating in the 3'-5' direction.. It carries out the reaction ATP + H2O = ADP + phosphate + H(+). With respect to regulation, phosphorylation on Ser-751 by CK2 controls the 5'-excision activity of ERCC1-XPF endonuclease; phosphorylated protein inhibits the excision activity and thus NER. ATPase activity is stimulated by TFIIH subunit p52 (GTF2H4). DNA translocase activity by this subunit in TFIIH is stimulated by XPA, ERCC5/XPG and XFP plus ERCC1. ATP-dependent 3'-5' DNA helicase/translocase; binds dsDNA rather than ssDNA, unzipping it in a translocase rather than classical helicase activity. Component of the general transcription and DNA repair factor IIH (TFIIH) core complex. When complexed to CDK-activating kinase (CAK), involved in RNA transcription by RNA polymerase II. The ATPase activity of XPB/ERCC3, but not its helicase activity, is required for DNA opening; it may wrap around the damaged DNA wedging it open, causing localized melting and twisting that allows XPD/ERCC2 helicase to anchor. The ATP-dependent helicase activity of XPB/ERCC3 may be required for promoter escape. Also involved in transcription-coupled nucleotide excision repair (NER) of damaged DNA. In NER, TFIIH acts by opening DNA around the lesion to allow the excision of the damaged oligonucleotide and its replacement by a new DNA fragment. The structure of the TFIIH transcription complex differs from the NER-TFIIH complex; large movements by XPD/ERCC2 and XPB/ERCC3 are stabilized by XPA. In Pongo abelii (Sumatran orangutan), this protein is General transcription and DNA repair factor IIH helicase/translocase subunit XPB (ERCC3).